A 483-amino-acid chain; its full sequence is Membrane-bound lytic murein transglycosylase F (483 aa).

A signal peptide spans 1–18; that stretch reads MKGLIARFIAGFALLLWA. A non-LT domain region spans residues 19–267; sequence WDMVFPWQQL…RIEEKYFNHL (249 aa). The tract at residues 269-483 is LT domain; sequence HFDYVDIQSY…SKESDSTLKE (215 aa). Glu-312 is a catalytic residue. Residues 458–483 are disordered; it reads QQIQNNEEQPSVPQEISKESDSTLKE. Positions 473 to 483 are enriched in basic and acidic residues; that stretch reads ISKESDSTLKE.

It in the N-terminal section; belongs to the bacterial solute-binding protein 3 family. In the C-terminal section; belongs to the transglycosylase Slt family.

The protein resides in the cell outer membrane. It carries out the reaction Exolytic cleavage of the (1-&gt;4)-beta-glycosidic linkage between N-acetylmuramic acid (MurNAc) and N-acetylglucosamine (GlcNAc) residues in peptidoglycan, from either the reducing or the non-reducing ends of the peptidoglycan chains, with concomitant formation of a 1,6-anhydrobond in the MurNAc residue.. In terms of biological role, murein-degrading enzyme that degrades murein glycan strands and insoluble, high-molecular weight murein sacculi, with the concomitant formation of a 1,6-anhydromuramoyl product. Lytic transglycosylases (LTs) play an integral role in the metabolism of the peptidoglycan (PG) sacculus. Their lytic action creates space within the PG sacculus to allow for its expansion as well as for the insertion of various structures such as secretion systems and flagella. The sequence is that of Membrane-bound lytic murein transglycosylase F from Actinobacillus pleuropneumoniae serotype 3 (strain JL03).